The chain runs to 147 residues: 3-dehydroquinate dehydratase (147 aa).

The active-site Proton acceptor is Y24. Substrate-binding residues include N75, H81, and D88. The active-site Proton donor is the H101. Substrate-binding positions include 102-103 (IS) and R112.

Belongs to the type-II 3-dehydroquinase family. Homododecamer.

The enzyme catalyses 3-dehydroquinate = 3-dehydroshikimate + H2O. The protein operates within metabolic intermediate biosynthesis; chorismate biosynthesis; chorismate from D-erythrose 4-phosphate and phosphoenolpyruvate: step 3/7. Its function is as follows. Catalyzes a trans-dehydration via an enolate intermediate. This chain is 3-dehydroquinate dehydratase, found in Cereibacter sphaeroides (strain KD131 / KCTC 12085) (Rhodobacter sphaeroides).